We begin with the raw amino-acid sequence, 296 residues long: Urease accessory protein UreD (296 aa).

Belongs to the UreD family. As to quaternary structure, ureD, UreF and UreG form a complex that acts as a GTP-hydrolysis-dependent molecular chaperone, activating the urease apoprotein by helping to assemble the nickel containing metallocenter of UreC. The UreE protein probably delivers the nickel.

It is found in the cytoplasm. Functionally, required for maturation of urease via the functional incorporation of the urease nickel metallocenter. This chain is Urease accessory protein UreD, found in Nitrosococcus oceani (strain ATCC 19707 / BCRC 17464 / JCM 30415 / NCIMB 11848 / C-107).